A 259-amino-acid chain; its full sequence is Pycsar effector protein RsmPycTIR (259 aa).

1 to 120 (MVGGDEVIAN…RRVHEDFSGR (120 aa)) serves as a coordination point for a nucleoside 3',5'-cyclic phosphate. The tract at residues 126 to 229 (LATGISRRTS…AEFQYQISSS (104 aa)) is TIR-like. Helical transmembrane passes span 136-156 (GWNW…AIWY), 169-189 (VLLP…ADPV), and 234-254 (QATA…LFWI).

Its subcellular location is the cell inner membrane. It carries out the reaction NAD(+) + H2O = ADP-D-ribose + nicotinamide + H(+). In terms of biological role, pycsar (pyrimidine cyclase system for antiphage resistance) provides immunity against bacteriophage. The pyrimidine cyclase (PycC) synthesizes cyclic nucleotides in response to infection; these serve as specific second messenger signals. The signals activate the adjacent effector, leading to bacterial cell death and abortive phage infection. A clade B Pycsar system. The effector gene of a two-gene Pycsar system. Expression of this and adjacent uridylate cyclase RsmPycC (AC A0A1V0HUX5) probably confers resistance to bacteriophage. The genes are probably only expressed in response to bacteriophage infection. Probably only responds to cUMP (produced by its cognate NTP cyclase), it may act by degrading NAD(+) and/or by impairing membrane integrity. The chain is Pycsar effector protein RsmPycTIR from Rhodovulum sp. (strain MB263).